A 243-amino-acid chain; its full sequence is Probable transcriptional regulatory protein BPP2422 (243 aa).

Residues 1 to 21 form a disordered region; the sequence is MAGHSKWANIQHRKGRQDAKR.

The protein belongs to the TACO1 family.

It localises to the cytoplasm. The chain is Probable transcriptional regulatory protein BPP2422 from Bordetella parapertussis (strain 12822 / ATCC BAA-587 / NCTC 13253).